The primary structure comprises 410 residues: Multifunctional CCA protein (410 aa).

Glycine 8 and arginine 11 together coordinate ATP. Residues glycine 8 and arginine 11 each coordinate CTP. Mg(2+)-binding residues include aspartate 21 and aspartate 23. Arginine 91, arginine 137, and arginine 140 together coordinate ATP. Residues arginine 91, arginine 137, and arginine 140 each coordinate CTP. Positions 228 to 329 constitute an HD domain; that stretch reads TGVHVLSVLQ…LELLQSFDVY (102 aa).

It belongs to the tRNA nucleotidyltransferase/poly(A) polymerase family. Bacterial CCA-adding enzyme type 1 subfamily. Monomer. Can also form homodimers and oligomers. Requires Mg(2+) as cofactor. The cofactor is Ni(2+).

It catalyses the reaction a tRNA precursor + 2 CTP + ATP = a tRNA with a 3' CCA end + 3 diphosphate. The catalysed reaction is a tRNA with a 3' CCA end + 2 CTP + ATP = a tRNA with a 3' CCACCA end + 3 diphosphate. Catalyzes the addition and repair of the essential 3'-terminal CCA sequence in tRNAs without using a nucleic acid template. Adds these three nucleotides in the order of C, C, and A to the tRNA nucleotide-73, using CTP and ATP as substrates and producing inorganic pyrophosphate. tRNA 3'-terminal CCA addition is required both for tRNA processing and repair. Also involved in tRNA surveillance by mediating tandem CCA addition to generate a CCACCA at the 3' terminus of unstable tRNAs. While stable tRNAs receive only 3'-terminal CCA, unstable tRNAs are marked with CCACCA and rapidly degraded. The sequence is that of Multifunctional CCA protein from Pseudomonas paraeruginosa (strain DSM 24068 / PA7) (Pseudomonas aeruginosa (strain PA7)).